The following is a 340-amino-acid chain: MNHRLSALVNGGFLSENEANKLMHDMMSGFLTDAEVAASLSILAHRGETAEEMTGFVKAMRQNAAPMERALDVVDTCGTGGDGLSTFNISTAAAIVRSAAGAKIAKHGNRSVSSKSGSADVLECLGIHIQSTPEETRRQIQEKNMGFLFAPLYHSSMKQVAAVRKQLGFRTVFNLLGPLCHPMQAKKQIIGVYSKEKAKLMAEALAPLEPEHVLFVCGEDGLDELTITANSYVIELKKDVMTEYTLNPEDFGLQKGYLSEIQVQSPEESAKLIQNILNHQTEGAPLHITALNAGAALYVAGKSESLMAGTLKAIETIKNGAAKEQLARLKQKTREEEIYA.

5-phospho-alpha-D-ribose 1-diphosphate-binding positions include Gly-78, Gly-81–Asp-82, Thr-86, Asn-88–Thr-91, Lys-106–Ser-114, and Ser-118. Gly-78 serves as a coordination point for anthranilate. Ser-90 provides a ligand contact to Mg(2+). Asn-109 provides a ligand contact to anthranilate. Anthranilate is bound at residue Arg-164. Mg(2+) contacts are provided by Asp-223 and Glu-224.

It belongs to the anthranilate phosphoribosyltransferase family. As to quaternary structure, homodimer. Requires Mg(2+) as cofactor.

It catalyses the reaction N-(5-phospho-beta-D-ribosyl)anthranilate + diphosphate = 5-phospho-alpha-D-ribose 1-diphosphate + anthranilate. Its pathway is amino-acid biosynthesis; L-tryptophan biosynthesis; L-tryptophan from chorismate: step 2/5. Its function is as follows. Catalyzes the transfer of the phosphoribosyl group of 5-phosphorylribose-1-pyrophosphate (PRPP) to anthranilate to yield N-(5'-phosphoribosyl)-anthranilate (PRA). The polypeptide is Anthranilate phosphoribosyltransferase (Bacillus pumilus (Bacillus mesentericus)).